A 689-amino-acid polypeptide reads, in one-letter code: Protein SDA1 homolog (689 aa).

Residues 254–319 (KKNTKNKKKL…RFEVKLMHMD (66 aa)) adopt a coiled-coil conformation. Disordered stretches follow at residues 485–512 (EQEKTEEPEEDDGWESASLSDDDEDGEW) and 606–689 (KPKS…RLMK). Positions 668 to 681 (SFRDKQIALRDSLL) are enriched in basic and acidic residues.

It belongs to the SDA1 family.

The protein resides in the nucleus. The protein localises to the nucleolus. In terms of biological role, required for 60S pre-ribosomal subunits export to the cytoplasm. This is Protein SDA1 homolog (sdad1) from Xenopus tropicalis (Western clawed frog).